A 248-amino-acid chain; its full sequence is Uridylate kinase (248 aa).

15–18 (KLSG) provides a ligand contact to ATP. Residues 23–28 (GAEGFG) form an involved in allosteric activation by GTP region. UMP is bound at residue Gly-57. ATP-binding residues include Gly-58 and Arg-62. UMP is bound by residues Asp-77 and 138–145 (TGNPFFTT). Thr-165, Tyr-171, and Asp-174 together coordinate ATP.

This sequence belongs to the UMP kinase family. In terms of assembly, homohexamer.

It localises to the cytoplasm. It catalyses the reaction UMP + ATP = UDP + ADP. It participates in pyrimidine metabolism; CTP biosynthesis via de novo pathway; UDP from UMP (UMPK route): step 1/1. Its activity is regulated as follows. Allosterically activated by GTP. Inhibited by UTP. Its function is as follows. Catalyzes the reversible phosphorylation of UMP to UDP. The polypeptide is Uridylate kinase (Yersinia enterocolitica serotype O:8 / biotype 1B (strain NCTC 13174 / 8081)).